The primary structure comprises 322 residues: Protease HtpX homolog (322 aa).

The next 2 helical transmembrane spans lie at 19-39 (ILLILFPCLVAVLTYLFCYLL) and 61-81 (FINLIPYIIGGVLVWFIIAYF). Zn(2+) is bound at residue His-165. Glu-166 is a catalytic residue. Zn(2+) is bound at residue His-169. A run of 2 helical transmembrane segments spans residues 175 to 195 (VRLLIISIVFVGIFSMLAQIA) and 216 to 236 (ILILVLAMIVAAIGYFFATLM). Glu-245 is a binding site for Zn(2+).

Belongs to the peptidase M48B family. It depends on Zn(2+) as a cofactor.

It is found in the cell inner membrane. The chain is Protease HtpX homolog from Bacteroides fragilis (strain YCH46).